Reading from the N-terminus, the 399-residue chain is Argininosuccinate synthase (399 aa).

9–17 (AYSGGLDTS) is an ATP binding site. Tyr-85 contributes to the L-citrulline binding site. Position 115 (Gly-115) interacts with ATP. The L-aspartate site is built by Thr-117, Asn-121, and Asp-122. Asn-121 serves as a coordination point for L-citrulline. Positions 125, 173, 258, and 270 each coordinate L-citrulline.

This sequence belongs to the argininosuccinate synthase family. Type 1 subfamily. Homotetramer.

The protein localises to the cytoplasm. The enzyme catalyses L-citrulline + L-aspartate + ATP = 2-(N(omega)-L-arginino)succinate + AMP + diphosphate + H(+). Its pathway is amino-acid biosynthesis; L-arginine biosynthesis; L-arginine from L-ornithine and carbamoyl phosphate: step 2/3. In Streptococcus gordonii (strain Challis / ATCC 35105 / BCRC 15272 / CH1 / DL1 / V288), this protein is Argininosuccinate synthase.